A 367-amino-acid chain; its full sequence is Phosphoribosylaminoimidazole-succinocarboxamide synthase (367 aa).

Belongs to the SAICAR synthetase family.

It catalyses the reaction 5-amino-1-(5-phospho-D-ribosyl)imidazole-4-carboxylate + L-aspartate + ATP = (2S)-2-[5-amino-1-(5-phospho-beta-D-ribosyl)imidazole-4-carboxamido]succinate + ADP + phosphate + 2 H(+). It functions in the pathway purine metabolism; IMP biosynthesis via de novo pathway; 5-amino-1-(5-phospho-D-ribosyl)imidazole-4-carboxamide from 5-amino-1-(5-phospho-D-ribosyl)imidazole-4-carboxylate: step 1/2. This chain is Phosphoribosylaminoimidazole-succinocarboxamide synthase, found in Shewanella frigidimarina (strain NCIMB 400).